We begin with the raw amino-acid sequence, 485 residues long: GTPase Der (485 aa).

EngA-type G domains follow at residues 3 to 167 (PTIA…PEPE) and 176 to 349 (PVFA…NAAM). Residues 9–16 (GRPNVGKS), 56–60 (DTGGF), 119–122 (NKGE), 182–189 (GRPNVGKS), 229–233 (DTAGV), and 294–297 (NKWD) each bind GTP. The region spanning 350-434 (IKMPTPKITR…PLRIQYNVSE (85 aa)) is the KH-like domain. The disordered stretch occupies residues 435-485 (NPYENAEDKPKKKPLRRVSLSNRIEKREGRKEEKNRFKKKTKVSVKKQFSK). The segment covering 457 to 469 (RIEKREGRKEEKN) has biased composition (basic and acidic residues). A compositionally biased stretch (basic residues) spans 470–485 (RFKKKTKVSVKKQFSK).

Belongs to the TRAFAC class TrmE-Era-EngA-EngB-Septin-like GTPase superfamily. EngA (Der) GTPase family. Associates with the 50S ribosomal subunit.

Functionally, GTPase that plays an essential role in the late steps of ribosome biogenesis. The sequence is that of GTPase Der from Neisseria gonorrhoeae (strain NCCP11945).